We begin with the raw amino-acid sequence, 268 residues long: Tryptophan synthase alpha chain (268 aa).

Active-site proton acceptor residues include Glu49 and Asp60.

Belongs to the TrpA family. Tetramer of two alpha and two beta chains.

It catalyses the reaction (1S,2R)-1-C-(indol-3-yl)glycerol 3-phosphate + L-serine = D-glyceraldehyde 3-phosphate + L-tryptophan + H2O. It participates in amino-acid biosynthesis; L-tryptophan biosynthesis; L-tryptophan from chorismate: step 5/5. The alpha subunit is responsible for the aldol cleavage of indoleglycerol phosphate to indole and glyceraldehyde 3-phosphate. This Citrobacter koseri (strain ATCC BAA-895 / CDC 4225-83 / SGSC4696) protein is Tryptophan synthase alpha chain.